Consider the following 822-residue polypeptide: MPAPIRLRELIRTIRTARTQAEEREMIQKECAAIRSSFREEDNTYRCRNVAKLLYMHMLGYPAHFGQLECLKLIASQKFTDKRIGYLGAMLLLDERQDVHLLMTNCIKNDLNHSTQFVQGLALCTLGCMGSSEMCRDLAGEVEKLLKTSNSYLRKKAALCAVHVIRKVPELMEMFLPATKNLLNEKNHGVLHTSVVLLTEMCERSPDMPAHFRKLVPQLVRILKNLIMSGYSPEHDVSGISDPFLQVRILRLLRILGRNDDDSSEAMNDILAQVATNTETSKNVGNAILYETVLTIMDIKSESGLRVLAINILGRFLLNNDKNIRYVALTSLLKTVRTDHNTVQRHRSTIVDCLKDLDVSIKRRAMELSFALVNGNNIRGMMKELLYFLDSCEPEFKADCASGIFLAAEKYAPSKRWHIDTIMRVLTTAGSYVRDDAVPNLIQLITNSVEMHAYTVQRLYKAILGDYSQQPLVQVAAWCIGEYGDLLVSGQCEEEGPIQVTEDEVLDILESVLISNMSTSVTRGYALTAIMKLSTRFTCTVNRIKKVVSIYGSSIDVELQQRAVEYNALFKKYDHMRSALLERMPVMEKVTTNGPTEIVQTNGETEPAPLETKPPPSGPQPTSQANDLLDLLGGNDITPVIPTAPTSKPSSAGGELLDLLGDINLTGAPAAAPAPASVPQISQPPFLLDGLSSQPLFNDIAAGIPSITAYSKNGLKIEFTFERSNTNPSVTVITIQASNSTELDMTDFVFQAAVPKTFQLQLLSPSSSIVPAFNTGTITQVIKVLNPQKQQLRMRIKLTYNHKGSAMQDLAEVNNFPPQSWQ.

Positions 597–628 are disordered; that stretch reads EIVQTNGETEPAPLETKPPPSGPQPTSQANDL. Positions 702-817 constitute a GAE domain; the sequence is AGIPSITAYS…QDLAEVNNFP (116 aa).

This sequence belongs to the adaptor complexes large subunit family. As to quaternary structure, adaptor protein complex 1 (AP-1) is a heterotetramer composed of two large adaptins (gamma-type subunit AP1G1 and beta-type subunit AP1B1), a medium adaptin (mu-type subunit AP1M1 or AP1M2) and a small adaptin (sigma-type subunit AP1S1 or AP1S2 or AP1S3). Interacts (via GAE domain) with RABEP1. Interacts with EPS15. Interacts with SYNRG/gamma-synergin. Interacts (via GAE domain) with AP1AR (via coiled-coil domain). Interacts with CLN3 (via dileucine motif); this interaction facilitates lysosomal targeting. Interacts (via GAE domain) with AFTPH/aftiphilin; the interaction is required to recruit AFTPH/aftiphilin to the perinuclear region of the cell.

It is found in the golgi apparatus. The protein resides in the cytoplasmic vesicle. The protein localises to the clathrin-coated vesicle membrane. It localises to the cytoplasm. Its subcellular location is the perinuclear region. It is found in the clathrin-coated vesicle. The protein resides in the membrane. The protein localises to the clathrin-coated pit. In terms of biological role, subunit of clathrin-associated adaptor protein complex 1 that plays a role in protein sorting in the late-Golgi/trans-Golgi network (TGN) and/or endosomes. The AP complexes mediate both the recruitment of clathrin to membranes and the recognition of sorting signals within the cytosolic tails of transmembrane cargo molecules. In association with AFTPH/aftiphilin in the aftiphilin/p200/gamma-synergin complex, involved in the trafficking of transferrin from early to recycling endosomes, and the membrane trafficking of furin and the lysosomal enzyme cathepsin D between the trans-Golgi network (TGN) and endosomes. In Pongo abelii (Sumatran orangutan), this protein is AP-1 complex subunit gamma-1 (AP1G1).